The following is a 296-amino-acid chain: Protoheme IX farnesyltransferase 2 (296 aa).

A run of 9 helical transmembrane segments spans residues 7 to 27 (LLVA…GGYF), 36 to 56 (PMLL…GCVL), 83 to 103 (LKAA…LLWW), 108 to 128 (LTTA…SLWF), 134 to 154 (YGTL…YCAV), 163 to 183 (ASLL…IAIF), 207 to 227 (IHIV…CLGG), 229 to 249 (AGYG…AIAL), and 265 to 285 (FAFS…DFQV).

This sequence belongs to the UbiA prenyltransferase family. Protoheme IX farnesyltransferase subfamily.

It is found in the cell inner membrane. The enzyme catalyses heme b + (2E,6E)-farnesyl diphosphate + H2O = Fe(II)-heme o + diphosphate. It functions in the pathway porphyrin-containing compound metabolism; heme O biosynthesis; heme O from protoheme: step 1/1. Functionally, converts heme B (protoheme IX) to heme O by substitution of the vinyl group on carbon 2 of heme B porphyrin ring with a hydroxyethyl farnesyl side group. The chain is Protoheme IX farnesyltransferase 2 from Pseudomonas paraeruginosa (strain DSM 24068 / PA7) (Pseudomonas aeruginosa (strain PA7)).